We begin with the raw amino-acid sequence, 227 residues long: MICOS complex subunit Mic19 (227 aa).

The N-myristoyl glycine moiety is linked to residue G2. Residue S29 is modified to Phosphoserine. The segment at 32 to 57 is disordered; that stretch reads VIDRMKESSPSGSKSQRYSSVYGASV. The span at 39-50 shows a compositional bias: polar residues; the sequence is SSPSGSKSQRYS. Y49 is subject to Phosphotyrosine. 4 positions are modified to phosphoserine: S50, S51, S56, and S58. A disordered region spans residues 73–92; that stretch reads EQAKKESEHQRRLKQARDLE. K142 carries the N6-acetyllysine modification. The CHCH domain maps to 180–222; that stretch reads HPVCADLQTKILQCYRQNTQQTLSCSALASQYMHCVNHAKQSM. 2 short sequence motifs (cx9C motif) span residues 183–193 and 204–214; these read CADLQTKILQC and CSALASQYMHC. Cystine bridges form between C183/C214 and C193/C204.

Belongs to the MICOS complex subunit Mic19 family. Metazoan Mic19 subfamily. Component of the mitochondrial contact site and cristae organizing system (MICOS) complex, composed of at least MICOS10/MIC10, CHCHD3/MIC19, CHCHD6/MIC25, APOOL/MIC27, IMMT/MIC60, APOO/MIC23/MIC26 and MICOS13/MIC13. This complex was also known under the names MINOS or MitOS complex. The MICOS complex associates with mitochondrial outer membrane proteins SAMM50, MTX1 and MTX2 (together described as components of the mitochondrial outer membrane sorting assembly machinery (SAM) complex) and DNAJC11, mitochondrial inner membrane protein TMEM11 and with HSPA9. The MICOS and SAM complexes together with DNAJC11 are part of a large protein complex spanning both membranes termed the mitochondrial intermembrane space bridging (MIB) complex. Interacts with HSPA1A/HSPA1B and OPA1, preferentially with the soluble OPA1 form.

The protein localises to the mitochondrion inner membrane. Its subcellular location is the cytoplasm. The protein resides in the nucleus. It is found in the mitochondrion. In terms of biological role, component of the MICOS complex, a large protein complex of the mitochondrial inner membrane that plays crucial roles in the maintenance of crista junctions, inner membrane architecture, and formation of contact sites to the outer membrane. Has also been shown to function as a transcription factor which binds to the BAG1 promoter and represses BAG1 transcription. Plays an important role in the maintenance of the MICOS complex stability and the mitochondrial cristae morphology. The sequence is that of MICOS complex subunit Mic19 (Chchd3) from Mus musculus (Mouse).